The primary structure comprises 509 residues: Cobyric acid synthase (509 aa).

In terms of domain architecture, GATase cobBQ-type spans 262–459; it reads EIKVGIIKLP…IHGIFENDSW (198 aa). Cysteine 343 (nucleophile) is an active-site residue. Histidine 451 is a catalytic residue.

It belongs to the CobB/CobQ family. CobQ subfamily.

It functions in the pathway cofactor biosynthesis; adenosylcobalamin biosynthesis. Its function is as follows. Catalyzes amidations at positions B, D, E, and G on adenosylcobyrinic A,C-diamide. NH(2) groups are provided by glutamine, and one molecule of ATP is hydrogenolyzed for each amidation. The chain is Cobyric acid synthase from Prochlorococcus marinus (strain MIT 9215).